The chain runs to 159 residues: Nucleotide-binding protein Psyr_4087 (159 aa).

This sequence belongs to the YajQ family.

Nucleotide-binding protein. The protein is Nucleotide-binding protein Psyr_4087 of Pseudomonas syringae pv. syringae (strain B728a).